A 777-amino-acid polypeptide reads, in one-letter code: MKMNVTATVSHALGHWPRILPALGIQVLKNRHQPCPVCGGSDRFRFDDREGRGTWYCNQCGAGDGLKLVEKVFGVSPSDAAAKVAAVTGSLPPADPAVTTAAVDETDAARKNAAALAQTLMAKTRTGTGNAYLTRKGFPGRECRMLTGTHRAGGVSWRAGDLVVPLYDDSGELVNLQLISADGRKRTLKGGQVRGTCHTLEGQNQAGKRLWIAEGYATALTVHHLTGETVMVALSSVNLLSLASLARQKHPACQIVLAADRDLSGDGQKKAAAAADACEGVVALPPVFGDWNDAFTQYGGEATRKAIYDAIRPPAESPFDTMSEAEFSAMSTSEKAMRIYEHYGEALAVDANGQLLSRYENGVWKVLPPQDFARDVAGLFQRLRAPFSSGKVASVVDTLKLIIPQQEAPSRRLIGFRNGVLDTQNGTFHPHSPSHWMRTLCDVDFTPPVDGETLETHAPAFWRWLDRAAGGRAEKRDVILAALFMVLANRYDWQLFLEVTGPGGSGKSIMAEIATLLAGEDNATSATIETLESPRERAALTGFSLIRLPDQEKWSGDGAGLKAITGGDAVSVDPKYRDAYSTHIPAVILAVNNNPMRFTDRSGGVSRRRVIIHFPEQIAPQERDPQLKDKITRELAVIVRHLMQKFSDPMLARSLLQSQQNSDEALNIKRDADPTFDFIGYLETLPQTSGMYMGNASIIPRNYRKYLYHAYLAYMEANGYRNVLSLKMFGLGLPVMLKEYGLNYEKRHTKQGIQTNLTLKEESYGDWLPKCDDPTTA.

The segment at 35 to 60 (CPVCGGSDRFRFDDREGRGTWYCNQC) adopts a CHC2-type zinc-finger fold. In terms of domain architecture, Toprim spans 208–296 (KRLWIAEGYA…VFGDWNDAFT (89 aa)). One can recognise an SF3 helicase domain in the interval 474-627 (EKRDVILAAL…IAPQERDPQL (154 aa)). 501-508 (GPGGSGKS) contacts ATP.

In terms of assembly, homohexamer.

The catalysed reaction is ATP + H2O = ADP + phosphate + H(+). Its function is as follows. This protein acts as a DNA primase generating di- to pentaribonucleotides; the predominant product being the dimer pppApG. It complexes specifically to the P4 origin of replication (ori) and its cis replication region (crr). It also acts as a DNA helicase. This Escherichia coli (Bacteriophage P4) protein is Putative P4-specific DNA primase (Alpha).